Consider the following 424-residue polypeptide: Histidine--tRNA ligase (424 aa).

It belongs to the class-II aminoacyl-tRNA synthetase family. As to quaternary structure, homodimer.

Its subcellular location is the cytoplasm. The catalysed reaction is tRNA(His) + L-histidine + ATP = L-histidyl-tRNA(His) + AMP + diphosphate + H(+). The polypeptide is Histidine--tRNA ligase (Shewanella pealeana (strain ATCC 700345 / ANG-SQ1)).